Here is a 130-residue protein sequence, read N- to C-terminus: Iron-sulfur cluster insertion protein ErpA (130 aa).

Residues C58, C122, and C124 each coordinate iron-sulfur cluster.

The protein belongs to the HesB/IscA family. As to quaternary structure, homodimer. Requires iron-sulfur cluster as cofactor.

Functionally, required for insertion of 4Fe-4S clusters for at least IspG. This chain is Iron-sulfur cluster insertion protein ErpA, found in Stenotrophomonas maltophilia (strain K279a).